The primary structure comprises 83 residues: Pigment-dispersing hormone peptides (83 aa).

A signal peptide spans 1–24 (MRFIILGVLFIAVASMILSNGVMA). At Ala-80 the chain carries Alanine amide.

It belongs to the arthropod PDH family. In terms of tissue distribution, strongly expressed in eyestalk tissue and cerebral ganglia (at protein level).

It is found in the secreted. Its function is as follows. The pigment-dispersing hormone causes the migration of the distal retinal pigment into the proximal end of the pigment chromatophore cells and thus decreases the amount of light entering the retinulas. May also function as a neurotransmitter and/or neuromodulator. The sequence is that of Pigment-dispersing hormone peptides from Eurydice pulchra (Speckled sea louse).